Consider the following 673-residue polypeptide: UvrABC system protein B (673 aa).

In terms of domain architecture, Helicase ATP-binding spans 26–414 (ANFEAGLAKQ…AGEVTELVVR (389 aa)). 39-46 (GVTGSGKT) contacts ATP. The Beta-hairpin motif lies at 92 to 115 (YYDYYQPEAYVPSSDTFIEKDSSI). One can recognise a Helicase C-terminal domain in the interval 431-597 (QVDDLMSEVH…SVERPIADIM (167 aa)). 2 stretches are compositionally biased toward basic and acidic residues: residues 600–609 (ARDDAAEKKS) and 618–628 (HVAEETPDYRA). Residues 600–628 (ARDDAAEKKSGKGRSKSRHVAEETPDYRA) are disordered. The region spanning 635 to 670 (AGKLKSLEQKMYQHAKDLEFEAAAQIRDQIQKLKAA) is the UVR domain.

The protein belongs to the UvrB family. Forms a heterotetramer with UvrA during the search for lesions. Interacts with UvrC in an incision complex.

It localises to the cytoplasm. The UvrABC repair system catalyzes the recognition and processing of DNA lesions. A damage recognition complex composed of 2 UvrA and 2 UvrB subunits scans DNA for abnormalities. Upon binding of the UvrA(2)B(2) complex to a putative damaged site, the DNA wraps around one UvrB monomer. DNA wrap is dependent on ATP binding by UvrB and probably causes local melting of the DNA helix, facilitating insertion of UvrB beta-hairpin between the DNA strands. Then UvrB probes one DNA strand for the presence of a lesion. If a lesion is found the UvrA subunits dissociate and the UvrB-DNA preincision complex is formed. This complex is subsequently bound by UvrC and the second UvrB is released. If no lesion is found, the DNA wraps around the other UvrB subunit that will check the other stand for damage. The protein is UvrABC system protein B of Xanthomonas axonopodis pv. citri (strain 306).